The primary structure comprises 300 residues: Ribosomal protein L11 methyltransferase (300 aa).

Positions 147, 168, 190, and 236 each coordinate S-adenosyl-L-methionine.

Belongs to the methyltransferase superfamily. PrmA family.

The protein localises to the cytoplasm. The enzyme catalyses L-lysyl-[protein] + 3 S-adenosyl-L-methionine = N(6),N(6),N(6)-trimethyl-L-lysyl-[protein] + 3 S-adenosyl-L-homocysteine + 3 H(+). In terms of biological role, methylates ribosomal protein L11. This is Ribosomal protein L11 methyltransferase from Leptospira borgpetersenii serovar Hardjo-bovis (strain JB197).